The primary structure comprises 199 residues: Pneumococcal vaccine antigen A homolog (199 aa).

Its subcellular location is the cell surface. This Streptococcus pyogenes serotype M18 (strain MGAS8232) protein is Pneumococcal vaccine antigen A homolog (pvaA).